A 185-amino-acid chain; its full sequence is Ribosome-recycling factor (185 aa).

It belongs to the RRF family.

It localises to the cytoplasm. Functionally, responsible for the release of ribosomes from messenger RNA at the termination of protein biosynthesis. May increase the efficiency of translation by recycling ribosomes from one round of translation to another. This is Ribosome-recycling factor from Helicobacter pylori (strain Shi470).